A 226-amino-acid chain; its full sequence is Biosynthetic peptidoglycan transglycosylase (226 aa).

Residues Val-7–Gly-29 traverse the membrane as a helical segment.

Belongs to the glycosyltransferase 51 family.

It is found in the cell inner membrane. The catalysed reaction is [GlcNAc-(1-&gt;4)-Mur2Ac(oyl-L-Ala-gamma-D-Glu-L-Lys-D-Ala-D-Ala)](n)-di-trans,octa-cis-undecaprenyl diphosphate + beta-D-GlcNAc-(1-&gt;4)-Mur2Ac(oyl-L-Ala-gamma-D-Glu-L-Lys-D-Ala-D-Ala)-di-trans,octa-cis-undecaprenyl diphosphate = [GlcNAc-(1-&gt;4)-Mur2Ac(oyl-L-Ala-gamma-D-Glu-L-Lys-D-Ala-D-Ala)](n+1)-di-trans,octa-cis-undecaprenyl diphosphate + di-trans,octa-cis-undecaprenyl diphosphate + H(+). It functions in the pathway cell wall biogenesis; peptidoglycan biosynthesis. Its function is as follows. Peptidoglycan polymerase that catalyzes glycan chain elongation from lipid-linked precursors. This Nitrobacter winogradskyi (strain ATCC 25391 / DSM 10237 / CIP 104748 / NCIMB 11846 / Nb-255) protein is Biosynthetic peptidoglycan transglycosylase.